A 418-amino-acid polypeptide reads, in one-letter code: Mitochondrial outer membrane protein SLC25A46 (418 aa).

Phosphoserine is present on residues Ser32 and Ser35. At Thr45 the chain carries Phosphothreonine. Residues Pro46–Gln96 are disordered. Residues Gln96 to Pro187 form a Solcar 1 repeat. A run of 6 helical transmembrane segments spans residues Phe103–Leu123, Phe167–Pro187, His202–Ile222, Leu258–Ile278, Phe314–Leu334, and Val382–Ile402. The Solcar 2 repeat unit spans residues Asp311–Leu413.

The protein belongs to the mitochondrial carrier (TC 2.A.29) family. In terms of assembly, associates with the mitochondrial contact site and cristae organizing system (MICOS) complex. May associate with the endoplasmic reticulum membrane protein complex (EMC).

It is found in the mitochondrion outer membrane. Its function is as follows. Transmembrane protein of the mitochondrial outer membrane that controls mitochondrial organization. May regulate the assembly of the MICOS (mitochondrial contact site and cristae organizing system) complex which is essential to the biogenesis and dynamics of mitochondrial cristae, the inwards folds of the inner mitochondrial membrane. Through its interaction with the EMC (endoplasmic reticulum membrane protein complex), could regulate mitochondrial lipid homeostasis and thereby mitochondrial fission. The chain is Mitochondrial outer membrane protein SLC25A46 from Mus musculus (Mouse).